A 120-amino-acid polypeptide reads, in one-letter code: uncharacterized protein (120 aa).

A run of 3 helical transmembrane segments spans residues 20–39, 52–71, and 86–108; these read FFWP…CYLL, GSSL…LFSI, and ILVV…SIIG.

It is found in the cell membrane. This is an uncharacterized protein from Pasteurella multocida (strain Pm70).